The chain runs to 83 residues: Blackelin-5 (83 aa).

Residues 1-24 (MSSGGLLLLLGLLTLWEGLTPVSS) form the signal peptide. Positions 31-81 (CELPADSGSCKGNFQAFYYHPVHRTCLEFIYGGCEGNANNFKTIDECKRTC) constitute a BPTI/Kunitz inhibitor domain. 3 disulfide bridges follow: Cys31–Cys81, Cys40–Cys64, and Cys56–Cys77.

The protein resides in the secreted. In terms of biological role, serine protease inhibitor. In Pseudechis porphyriacus (Red-bellied black snake), this protein is Blackelin-5.